Here is a 267-residue protein sequence, read N- to C-terminus: Tryptophan synthase alpha chain (267 aa).

Active-site proton acceptor residues include Glu43 and Asp54.

It belongs to the TrpA family. As to quaternary structure, tetramer of two alpha and two beta chains.

It catalyses the reaction (1S,2R)-1-C-(indol-3-yl)glycerol 3-phosphate + L-serine = D-glyceraldehyde 3-phosphate + L-tryptophan + H2O. The protein operates within amino-acid biosynthesis; L-tryptophan biosynthesis; L-tryptophan from chorismate: step 5/5. In terms of biological role, the alpha subunit is responsible for the aldol cleavage of indoleglycerol phosphate to indole and glyceraldehyde 3-phosphate. The chain is Tryptophan synthase alpha chain from Bacillus licheniformis (strain ATCC 14580 / DSM 13 / JCM 2505 / CCUG 7422 / NBRC 12200 / NCIMB 9375 / NCTC 10341 / NRRL NRS-1264 / Gibson 46).